We begin with the raw amino-acid sequence, 97 residues long: Sugar transporter SemiSWEET (97 aa).

The PQ-loop domain occupies 4-70 (IERIGKALEP…IYGIYHKNPT (67 aa)). The next 3 helical transmembrane spans lie at 15–35 (MLVM…KLYV), 44–65 (LSLT…YGIY), and 71–91 (IWVG…GIIA).

Homodimer.

It localises to the cell membrane. Functionally, the homodimer mediates transmembrane sugar transport down a concentration gradient. Transport is probably effected by rocking-type movements, where a cargo-binding cavity opens first on one and then on the other side of the membrane. The chain is Sugar transporter SemiSWEET from Vibrio sp. (strain N418).